The following is a 212-amino-acid chain: Putative inactive 6-phospho-alpha-glucosidase (212 aa).

Residue 4-70 (FSVVVAGGGS…PDIAFSYTTD (67 aa)) coordinates NAD(+). Residues cysteine 169 and histidine 200 each contribute to the Mn(2+) site.

Belongs to the glycosyl hydrolase 4 family.

The protein is Putative inactive 6-phospho-alpha-glucosidase of Escherichia coli (strain K12).